The primary structure comprises 130 residues: Histone H2A type 1 (130 aa).

The tract at residues 1 to 22 is disordered; sequence MSGRGKQGGKTRAKAKTRSSRA. Position 2 is an N-acetylserine (Ser-2). Ser-2 is modified (phosphoserine). Lys-6 carries the N6-(2-hydroxyisobutyryl)lysine modification. Position 6 is an N6-acetyllysine (Lys-6). Residues 7-19 are compositionally biased toward basic residues; sequence QGGKTRAKAKTRS. The residue at position 10 (Lys-10) is an N6-(2-hydroxyisobutyryl)lysine; alternate. At Lys-10 the chain carries N6-lactoyllysine; alternate. Lys-10 is subject to N6-succinyllysine. Glycyl lysine isopeptide (Lys-Gly) (interchain with G-Cter in ubiquitin) cross-links involve residues Lys-14 and Lys-16. Lys-37 is modified (N6-(2-hydroxyisobutyryl)lysine; alternate). N6-(2-hydroxyisobutyryl)lysine occurs at positions 75 and 76. Residue Lys-96 is modified to N6-(2-hydroxyisobutyryl)lysine; alternate. Lys-96 is modified (N6-succinyllysine). At Lys-96 the chain carries N6-glutaryllysine; alternate. Position 105 is an N5-methylglutamine (Gln-105). Residue Lys-119 is modified to N6-(2-hydroxyisobutyryl)lysine; alternate. At Lys-119 the chain carries N6-glutaryllysine; alternate. Lys-120 is covalently cross-linked (Glycyl lysine isopeptide (Lys-Gly) (interchain with G-Cter in ubiquitin)).

It belongs to the histone H2A family. As to quaternary structure, the nucleosome is a histone octamer containing two molecules each of H2A, H2B, H3 and H4 assembled in one H3-H4 heterotetramer and two H2A-H2B heterodimers. The octamer wraps approximately 147 bp of DNA. Post-translationally, monoubiquitination of Lys-120 (H2AK119Ub) gives a specific tag for epigenetic transcriptional repression. Following DNA double-strand breaks (DSBs), it is ubiquitinated through 'Lys-63' linkage of ubiquitin moieties, leading to the recruitment of repair proteins to sites of DNA damage. H2AK119Ub and ionizing radiation-induced 'Lys-63'-linked ubiquitination are distinct events. Phosphorylation on Ser-2 is enhanced during mitosis. Phosphorylation on Ser-2 directly represses transcription. In terms of processing, glutamine methylation at Gln-105 (H2AQ104me) by FBL is specifically dedicated to polymerase I. It is present at 35S ribosomal DNA locus and impairs binding of the FACT complex.

It is found in the nucleus. Its subcellular location is the chromosome. Core component of nucleosome. Nucleosomes wrap and compact DNA into chromatin, limiting DNA accessibility to the cellular machineries which require DNA as a template. Histones thereby play a central role in transcription regulation, DNA repair, DNA replication and chromosomal stability. DNA accessibility is regulated via a complex set of post-translational modifications of histones, also called histone code, and nucleosome remodeling. The chain is Histone H2A type 1 from Xenopus laevis (African clawed frog).